The sequence spans 220 residues: Fructose-6-phosphate aldolase (220 aa).

Lysine 85 acts as the Schiff-base intermediate with substrate in catalysis.

The protein belongs to the transaldolase family. Type 3A subfamily. Homodecamer.

The protein localises to the cytoplasm. The catalysed reaction is beta-D-fructose 6-phosphate = dihydroxyacetone + D-glyceraldehyde 3-phosphate. Its function is as follows. Catalyzes the reversible formation of fructose 6-phosphate from dihydroxyacetone and D-glyceraldehyde 3-phosphate via an aldolization reaction. The protein is Fructose-6-phosphate aldolase of Salmonella heidelberg (strain SL476).